Reading from the N-terminus, the 126-residue chain is Small ribosomal subunit protein uS13 (126 aa).

Positions 91–126 (RHRRGLPVRGQRTSTNARTRKGPRRAIAGKKKPGKK) are disordered. Basic residues predominate over residues 108–126 (RTRKGPRRAIAGKKKPGKK).

The protein belongs to the universal ribosomal protein uS13 family. Part of the 30S ribosomal subunit. Forms a loose heterodimer with protein S19. Forms two bridges to the 50S subunit in the 70S ribosome.

Functionally, located at the top of the head of the 30S subunit, it contacts several helices of the 16S rRNA. In the 70S ribosome it contacts the 23S rRNA (bridge B1a) and protein L5 of the 50S subunit (bridge B1b), connecting the 2 subunits; these bridges are implicated in subunit movement. Contacts the tRNAs in the A and P-sites. This Streptomyces coelicolor (strain ATCC BAA-471 / A3(2) / M145) protein is Small ribosomal subunit protein uS13.